Here is a 237-residue protein sequence, read N- to C-terminus: Purine nucleoside phosphorylase DeoD-type (237 aa).

His4 lines the a purine D-ribonucleoside pocket. Phosphate contacts are provided by residues Gly20, Arg24, Arg43, and 87–90 (RVGT). Residues 179 to 181 (EME) and 203 to 204 (SD) contribute to the a purine D-ribonucleoside site. Residue Asp204 is the Proton donor of the active site.

The protein belongs to the PNP/UDP phosphorylase family. As to quaternary structure, homohexamer; trimer of homodimers.

It catalyses the reaction a purine D-ribonucleoside + phosphate = a purine nucleobase + alpha-D-ribose 1-phosphate. The enzyme catalyses a purine 2'-deoxy-D-ribonucleoside + phosphate = a purine nucleobase + 2-deoxy-alpha-D-ribose 1-phosphate. In terms of biological role, catalyzes the reversible phosphorolytic breakdown of the N-glycosidic bond in the beta-(deoxy)ribonucleoside molecules, with the formation of the corresponding free purine bases and pentose-1-phosphate. This is Purine nucleoside phosphorylase DeoD-type from Streptococcus pyogenes serotype M5 (strain Manfredo).